A 381-amino-acid chain; its full sequence is Protein COS1 (381 aa).

Topologically, residues 1–42 are cytoplasmic; it reads MKENELKNEKSVDVLSFKQLESQKIVLPQDLFRSSFTWFCYE. The chain crosses the membrane as a helical span at residues 43–63; that stretch reads IYKSLAFRIWMLLWLPLSVWW. Residues 64 to 72 are Extracellular-facing; the sequence is KLSNNCIYP. The helical transmembrane segment at 73 to 93 threads the bilayer; sequence LIVSLLVLFLGPIFVLVICGL. Residues 94–231 lie on the Cytoplasmic side of the membrane; sequence SRKRSLSKQL…YRFKLTWFLK (138 aa). Residues 232–252 traverse the membrane as a helical segment; that stretch reads RISNIFMLIPFLNFLCCIYVS. At 253–254 the chain is on the extracellular side; sequence RG. Residues 255–275 traverse the membrane as a helical segment; it reads MCLLLRTFYLGWILFMLVQGF. Over 276–381 the chain is Cytoplasmic; the sequence is QNMRMIVLSV…QLSCSEESLA (106 aa).

The protein belongs to the DUP/COS family.

Its subcellular location is the membrane. The protein is Protein COS1 (COS1) of Saccharomyces cerevisiae (strain ATCC 204508 / S288c) (Baker's yeast).